Consider the following 207-residue polypeptide: MKVKVQKIDGKAAGDVELDDAVFGVEPRADILHRVVTWQLENRRGTARPTRERSDVARTGAKFGRQKGSGNARHGDRGAPIFIGGGKAHGARKRDFNPSLNKKIRALGLKMALSSKAKDGLVVVDSLDLKDAKTKVLKGHFDKAGWNGKVLVIDGESVNEGFSKAAGNLPGVNVLPAMGANVYDILKHDTLVLTKDAVEKLEARFNG.

It belongs to the universal ribosomal protein uL4 family. In terms of assembly, part of the 50S ribosomal subunit.

In terms of biological role, one of the primary rRNA binding proteins, this protein initially binds near the 5'-end of the 23S rRNA. It is important during the early stages of 50S assembly. It makes multiple contacts with different domains of the 23S rRNA in the assembled 50S subunit and ribosome. Forms part of the polypeptide exit tunnel. In Erythrobacter litoralis (strain HTCC2594), this protein is Large ribosomal subunit protein uL4.